We begin with the raw amino-acid sequence, 576 residues long: MNIFNQLKQDIIAASQKLYNNKEIANTATIETPKDSFNGDLSSNIAMIIASKESIAPREVALKFKEVLVTLPYIASIEIAGPGFINFTIKAESWQAAIKDILQHEEKFFEIDIDKNSNINIEYVSANPTGPMHIGHARGAVYGDVLARILQKVGYSVTKEYYVNDAGSQINDLVSTVLLRYKEALGEPITIPVGLYPGEYLIPLGEILSKEYGNKLLTMNDVERFKIIKSFAVEKMLDLNRKDLADLGIKHDVFFSEQSLYDKGEIEKTVKLLERMGLIYEGTLPAPKGKVHEDWEYRVQKLFKSTNYGDSQDRPIEKADGSWSYFASDLAYAKDKIDRGANHLIYVLGADHSGYVKRIEAIVKALGQEKVKVDVKICQLVNFVENGVPIKMSKRLGSFASVQDVNKEVGKDIIRFMMLTRQNDKPLDFDLVKVKEQSRENPIFYVQYAHVRTKSILSKARELMPEAYNSFKEGKYNLSLLSSEEEIEIIKLLAAWTKTLEASVKYFEPHRIAFYLINLASKFHSMWNFGKENSDYRFIIENNKELTLARLALASVIQKIIASGLEVIGVEPMVTM.

Residues 126–136 (ANPTGPMHIGH) carry the 'HIGH' region motif.

It belongs to the class-I aminoacyl-tRNA synthetase family. Monomer.

It is found in the cytoplasm. The enzyme catalyses tRNA(Arg) + L-arginine + ATP = L-arginyl-tRNA(Arg) + AMP + diphosphate. In Rickettsia prowazekii (strain Madrid E), this protein is Arginine--tRNA ligase (argS).